Here is a 475-residue protein sequence, read N- to C-terminus: Coronin-2B (475 aa).

5 WD repeats span residues 80-120 (GHQG…LKRN), 130-172 (GHSR…KMID), 174-212 (HTDV…VLQE), 215-258 (CKNH…MPVT), and 260-303 (EEID…PYLT). The stretch at 431 to 470 (NELLRMFFKQQEEIRRLKEQLSQRDLLVRQLELELKNLRN) forms a coiled coil.

The protein belongs to the WD repeat coronin family.

The protein resides in the cytoplasm. Its subcellular location is the cytoskeleton. In terms of biological role, may play a role in the reorganization of neuronal actin structure. This is Coronin-2B (coro2b) from Xenopus laevis (African clawed frog).